We begin with the raw amino-acid sequence, 425 residues long: Polyribonucleotide 5'-hydroxyl-kinase Clp1 (425 aa).

ATP-binding positions include glutamate 22, lysine 62, and 124-129 (DVGKST).

This sequence belongs to the Clp1 family. Clp1 subfamily. Component of the tRNA splicing endonuclease complex, composed of CLP1, TSEN2, TSEN15, TSEN34 and TSEN54. Component of pre-mRNA cleavage complex II (CF-II). Also associates with numerous components of the pre-mRNA cleavage complex I (CF-I/CFIm), including NUDT21, CPSF2, CPSF3, CPSF6 and CPSF7. Interacts with CSTF2 and SYMPK. The cofactor is Mg(2+). Mn(2+) is required as a cofactor. It depends on Ni(2+) as a cofactor.

The protein localises to the nucleus. It catalyses the reaction a 5'-end dephospho-2'-deoxyribonucleoside-DNA + ATP = a 5'-end 5'-phospho-2'-deoxyribonucleoside-DNA + ADP + H(+). It carries out the reaction a 5'-end dephospho-ribonucleoside-RNA + ATP = a 5'-end 5'-phospho-ribonucleoside-RNA + ADP + H(+). In terms of biological role, polynucleotide kinase that can phosphorylate the 5'-hydroxyl groups of double-stranded RNA (dsRNA), single-stranded RNA (ssRNA), double-stranded DNA (dsDNA) and double-stranded DNA:RNA hybrids. dsRNA is phosphorylated more efficiently than dsDNA, and the RNA component of a DNA:RNA hybrid is phosphorylated more efficiently than the DNA component. Plays a key role in both tRNA splicing and mRNA 3'-end formation. Component of the tRNA splicing endonuclease complex: phosphorylates the 5'-terminus of the tRNA 3'-exon during tRNA splicing; this phosphorylation event is a prerequisite for the subsequent ligation of the two exon halves and the production of a mature tRNA. Its role in tRNA splicing and maturation is required for cerebellar development. Component of the pre-mRNA cleavage complex II (CF-II), which seems to be required for mRNA 3'-end formation. Also phosphorylates the 5'-terminus of exogenously introduced short interfering RNAs (siRNAs), which is a necessary prerequisite for their incorporation into the RNA-induced silencing complex (RISC). However, endogenous siRNAs and microRNAs (miRNAs) that are produced by the cleavage of dsRNA precursors by DICER1 already contain a 5'-phosphate group, so this protein may be dispensible for normal RNA-mediated gene silencing. This chain is Polyribonucleotide 5'-hydroxyl-kinase Clp1, found in Homo sapiens (Human).